A 152-amino-acid chain; its full sequence is Endoribonuclease YbeY (152 aa).

Histidine 118, histidine 122, and histidine 128 together coordinate Zn(2+).

It belongs to the endoribonuclease YbeY family. Requires Zn(2+) as cofactor.

It is found in the cytoplasm. Its function is as follows. Single strand-specific metallo-endoribonuclease involved in late-stage 70S ribosome quality control and in maturation of the 3' terminus of the 16S rRNA. The polypeptide is Endoribonuclease YbeY (Lacticaseibacillus casei (strain BL23) (Lactobacillus casei)).